Consider the following 1118-residue polypeptide: Sodium-driven chloride bicarbonate exchanger (1118 aa).

Disordered stretches follow at residues 1–23 and 58–97; these read MEIKDQGAQMEPLLPTRNDEEAV and GRKSHRRHRHRGHKHRKRDRERDSGLEDGRESPSFDTPSQ. Over 1–509 the chain is Cytoplasmic; it reads MEIKDQGAQM…DFRDAFSLQC (509 aa). Positions 59-76 are enriched in basic residues; it reads RKSHRRHRHRGHKHRKRD. Over residues 77 to 90 the composition is skewed to basic and acidic residues; sequence RERDSGLEDGRESP. Phosphoserine is present on S89. T94 is subject to Phosphothreonine. Zn(2+) contacts are provided by H221 and H223. Disordered regions lie at residues 269–310 and 457–476; these read AENK…KGPP and NGTAAHGEAEPHGGHSGPEL. S276 is modified (phosphoserine). Residues 510–530 traverse the membrane as a helical segment; sequence LASFLFLYCACMSPVITFGGL. Topologically, residues 531-538 are extracellular; that stretch reads LGEATEGR. A helical membrane pass occupies residues 539 to 559; it reads ISAIESLFGASMTGIAYSLFG. Topologically, residues 560–562 are cytoplasmic; it reads GQP. Residues 563 to 583 form a helical membrane-spanning segment; the sequence is LTILGSTGPVLVFEKILFKFC. Residues 584–596 lie on the Extracellular side of the membrane; sequence KEYGLSYLSLRAS. A helical transmembrane segment spans residues 597–617; sequence IGLWTATLCIILVATDASSLV. The Cytoplasmic segment spans residues 618–626; that stretch reads CYITRFTEE. The chain crosses the membrane as a helical span at residues 627–647; it reads AFASLICIIFIYEALEKLFEL. The Extracellular portion of the chain corresponds to 648-720; sequence SETYPINMHN…VGRACGHGHP (73 aa). Residues N677, N687, and N697 are each glycosylated (N-linked (GlcNAc...) asparagine). The helical transmembrane segment at 721-741 threads the bilayer; the sequence is YVPDVLFWSVILFFSTVTMSA. Topologically, residues 742-762 are cytoplasmic; the sequence is TLKQFKTSRYFPTKVRSIVSD. The chain crosses the membrane as a helical span at residues 763–783; it reads FAVFLTILCMVLIDYAIGIPS. Residues 784–809 are Extracellular-facing; the sequence is PKLQVPSVFKPTRDDRGWFVTPLGPN. A helical transmembrane segment spans residues 810-830; it reads PWWTIIAAIIPALLCTILIFM. Residues 831–855 lie on the Cytoplasmic side of the membrane; the sequence is DQQITAVIINRKEHKLKKGCGYHLD. A helical transmembrane segment spans residues 856 to 876; the sequence is LLMVAVMLGVCSIMGLPWFVA. Residues 877–912 lie on the Extracellular side of the membrane; the sequence is ATVLSITHVNSLKLESECSAPGEQPKFLGIREQRVT. A helical membrane pass occupies residues 913–933; it reads GLMIFILMGSSVFMTSILKFI. The Cytoplasmic portion of the chain corresponds to 934–935; it reads PM. The helical transmembrane segment at 936–956 threads the bilayer; the sequence is PVLYGVFLYMGASSLKGIQLF. At 957 to 998 the chain is on the extracellular side; it reads DRIKLFWMPAKHQPDFIYLRHVPLRKVHLFTVIQMSCLGLLW. Residues 999 to 1019 form a helical membrane-spanning segment; the sequence is IIKVSRAAIVFPMMVLALVFV. Over 1020–1118 the chain is Cytoplasmic; that stretch reads RKLMDFLFTK…SRFPSKSSPS (99 aa). 2 positions are modified to phosphoserine: S1057 and S1085.

This sequence belongs to the anion exchanger (TC 2.A.31) family. N-glycosylated. In the brain, detected in cerebral cortex, subcortex, cerebellum, hippocampus and medulla (at protein level). In the cerebrum, expressed at high levels throughout the cortex, at lower levels in striatum and not detectable in the corpus callosum (at protein level). In the cerebellum, detected at high levels in the molecular layer but at very low levels in the granular layer (at protein level). In the central nervous system, detected in neurons in the olfactory bulb, cortex and cerebellum (at protein level). Within the hippocampus, abundantly expressed in CA3 pyramidal cells (at protein level). Strongly expressed in the retina with high levels in bipolar and amacrine cells (at protein level). Expressed in the epithelial cells of the choroid plexus. During embryonic development, expressed in neurons of the central nervous system. Also expressed in the peripheral nervous system and in non-neuronal tissues such as the dura and some epithelia including the acid-secreting epithelium of the stomach and the duodenal epithelium. In the embryonic retina, expression is restricted to the neuronal cell layer and the retinal pigment epithelium. As to expression, expressed at high levels in brain and at low levels in the pituitary, testis, kidney and ileum. Also expressed in pancreatic islets.

The protein localises to the basolateral cell membrane. The protein resides in the apical cell membrane. It localises to the cell projection. Its subcellular location is the dendrite. It is found in the axon. The protein localises to the perikaryon. The protein resides in the presynapse. It localises to the postsynapse. It catalyses the reaction 2 hydrogencarbonate(out) + chloride(in) + Na(+)(out) = 2 hydrogencarbonate(in) + chloride(out) + Na(+)(in). With respect to regulation, zinc-binding negatively regulates its activity. In terms of biological role, sodium/bicarbonate cotransporter which plays an important role in regulating intracellular pH. Has been shown to act as a sodium/bicarbonate cotransporter in exchange for intracellular chloride. Has also been shown to act as a sodium/biocarbonate cotransporter which is not responsible for net efflux of chloride, with the observed chloride efflux being due to chloride self-exchange. Controls neuronal pH and may contribute to the secretion of cerebrospinal fluid. Acting on presynaptic intracellular pH, it promotes GABA release, reduces the excitability of CA1 pyramidal neurons, and modulates short-term synaptic plasticity. Required in retinal cells to maintain normal pH which is necessary for normal vision. In the kidney, likely to mediate bicarbonate reclamation in the apical membrane of the proximal tubules. Sodium/bicarbonate cotransporter which mediates cotransport of sodium and bicarbonate in association with an efflux of intracellular chloride. The polypeptide is Sodium-driven chloride bicarbonate exchanger (Mus musculus (Mouse)).